A 966-amino-acid polypeptide reads, in one-letter code: MRLKNFPFFVLFFFFCFNSNQSWGLMSSNQQPQFFKLMKNSLFGDALSTWNVYDVGTNYCNFTGVRCDGQGLVTDLDLSGLSLSGIFPDGVCSYFPNLRVLRLSHNHLNKSSSFLNTIPNCSLLRDLNMSSVYLKGTLPDFSQMKSLRVIDMSWNHFTGSFPLSIFNLTDLEYLNFNENPELDLWTLPDSVSKLTKLTHMLLMTCMLHGNIPRSIGNLTSLVDLELSGNFLSGEIPKEIGNLSNLRQLELYYNYHLTGSIPEEIGNLKNLTDIDISVSRLTGSIPDSICSLPNLRVLQLYNNSLTGEIPKSLGNSKTLKILSLYDNYLTGELPPNLGSSSPMIALDVSENRLSGPLPAHVCKSGKLLYFLVLQNRFTGSIPETYGSCKTLIRFRVASNRLVGTIPQGVMSLPHVSIIDLAYNSLSGPIPNAIGNAWNLSELFMQSNRISGVIPHELSHSTNLVKLDLSNNQLSGPIPSEVGRLRKLNLLVLQGNHLDSSIPDSLSNLKSLNVLDLSSNLLTGRIPENLSELLPTSINFSSNRLSGPIPVSLIRGGLVESFSDNPNLCIPPTAGSSDLKFPMCQEPHGKKKLSSIWAILVSVFILVLGVIMFYLRQRMSKNRAVIEQDETLASSFFSYDVKSFHRISFDQREILESLVDKNIVGHGGSGTVYRVELKSGEVVAVKKLWSQSNKDSASEDKMHLNKELKTEVETLGSIRHKNIVKLFSYFSSLDCSLLVYEYMPNGNLWDALHKGFVHLEWRTRHQIAVGVAQGLAYLHHDLSPPIIHRDIKSTNILLDVNYQPKVADFGIAKVLQARGKDSTTTVMAGTYGYLAPEYAYSSKATIKCDVYSFGVVLMELITGKKPVDSCFGENKNIVNWVSTKIDTKEGLIETLDKRLSESSKADMINALRVAIRCTSRTPTIRPTMNEVVQLLIDATPQGGPDMTSKPTTKIKDSIVSDHLTQTRL.

Positions 1-22 are cleaved as a signal peptide; sequence MRLKNFPFFVLFFFFCFNSNQS. The Extracellular segment spans residues 23–592; that stretch reads WGLMSSNQQP…QEPHGKKKLS (570 aa). An N-linked (GlcNAc...) asparagine glycan is attached at Asn-61. 20 LRR repeats span residues 70–94, 95–120, 122–144, 145–168, 170–194, 195–218, 219–242, 245–267, 268–291, 292–315, 317–339, 341–363, 365–386, 387–411, 412–435, 437–459, 460–483, 484–507, 508–531, and 533–554; these read QGLV…VCSY, FPNL…TIPN, SLLR…FSQM, KSLR…IFNL, DLEY…VSKL, TKLT…IGNL, TSLV…IGNL, LRQL…IGNL, KNLT…ICSL, PNLR…LGNS, TLKI…LGSS, PMIA…VCKS, KLLY…TYGS, CKTL…VMSL, PHVS…IGNA, NLSE…LSHS, TNLV…VGRL, RKLN…LSNL, KSLN…LSEL, and PTSI…LIRG. 4 N-linked (GlcNAc...) asparagine glycosylation sites follow: Asn-109, Asn-120, Asn-128, and Asn-167. 2 N-linked (GlcNAc...) asparagine glycosylation sites follow: Asn-217 and Asn-241. Residues Asn-269 and Asn-301 are each glycosylated (N-linked (GlcNAc...) asparagine). A glycan (N-linked (GlcNAc...) asparagine) is linked at Asn-437. N-linked (GlcNAc...) asparagine glycans are attached at residues Asn-527 and Asn-537. Residues 593–613 form a helical membrane-spanning segment; sequence SIWAILVSVFILVLGVIMFYL. Topologically, residues 614-966 are cytoplasmic; sequence RQRMSKNRAV…VSDHLTQTRL (353 aa). The region spanning 656 to 934 is the Protein kinase domain; sequence LVDKNIVGHG…TMNEVVQLLI (279 aa). Residues 662–670 and Lys-684 each bind ATP; that span reads VGHGGSGTV. Tyr-738 and Tyr-775 each carry phosphotyrosine. The active-site Proton acceptor is the Asp-788. Tyr-831 and Tyr-838 each carry phosphotyrosine. The tract at residues 937–966 is disordered; it reads TPQGGPDMTSKPTTKIKDSIVSDHLTQTRL.

This sequence belongs to the protein kinase superfamily. Ser/Thr protein kinase family. As to quaternary structure, interacts with the root-derived peptides CEP1, CEP3 and CEP5. As to expression, expressed in the vasculature, especially in phloem and procambium regions, of stems, leaves, cotyledons, sepals, pedals, pedicels, hypocotyls and roots (in primary and lateral roots, but not in root tips). Expressed in the root from the basal meristem onward. Present in the phloem pole pericycle and in the adjacent phloem.

The protein resides in the cell membrane. It carries out the reaction L-tyrosyl-[protein] + ATP = O-phospho-L-tyrosyl-[protein] + ADP + H(+). Its function is as follows. Receptor kinase involved in the perception of C-terminally encoded plant signaling peptide (CEP) and subsequent regulation of root and shoot development. Required for xylem and phloem cell files morphology and organization, probably by preventing ectopic lignification in phloem cells. Together with CEPR2, mediates systemic nitrogen (N)-demand signaling upon the perception of root-derived peptides (e.g. CEP1) via the up-regulation of genes involved in N uptake and assimilation pathways. Positively regulates lateral root initiation and development; probably repressed by the signaling peptide CEP5. This is Receptor protein-tyrosine kinase CEPR1 from Arabidopsis thaliana (Mouse-ear cress).